A 300-amino-acid polypeptide reads, in one-letter code: Tyrosine recombinase XerC (300 aa).

One can recognise a Core-binding (CB) domain in the interval 2 to 88; that stretch reads IQEGKLEQQF…SLRSFYTFLL (87 aa). Residues 109–294 form the Tyr recombinase domain; the sequence is RLPKFFYSEE…TKEHLKSTYM (186 aa). Residues Arg-150, Lys-174, His-246, Arg-249, and His-272 contribute to the active site. Residue Tyr-281 is the O-(3'-phospho-DNA)-tyrosine intermediate of the active site.

The protein belongs to the 'phage' integrase family. XerC subfamily. In terms of assembly, forms a cyclic heterotetrameric complex composed of two molecules of XerC and two molecules of XerD.

Its subcellular location is the cytoplasm. Its function is as follows. Site-specific tyrosine recombinase, which acts by catalyzing the cutting and rejoining of the recombining DNA molecules. The XerC-XerD complex is essential to convert dimers of the bacterial chromosome into monomers to permit their segregation at cell division. It also contributes to the segregational stability of plasmids. In Listeria monocytogenes serotype 4b (strain F2365), this protein is Tyrosine recombinase XerC.